The chain runs to 451 residues: 3-phosphoshikimate 1-carboxyvinyltransferase (451 aa).

3 residues coordinate 3-phosphoshikimate: Lys-30, Ser-31, and Arg-35. Position 30 (Lys-30) interacts with phosphoenolpyruvate. Positions 103 and 131 each coordinate phosphoenolpyruvate. 3-phosphoshikimate-binding residues include Ser-176, Gln-178, Asp-329, and Lys-356. Gln-178 contributes to the phosphoenolpyruvate binding site. The active-site Proton acceptor is Asp-329. Phosphoenolpyruvate contacts are provided by Arg-360 and Arg-404.

Belongs to the EPSP synthase family. Monomer.

It is found in the cytoplasm. The enzyme catalyses 3-phosphoshikimate + phosphoenolpyruvate = 5-O-(1-carboxyvinyl)-3-phosphoshikimate + phosphate. It functions in the pathway metabolic intermediate biosynthesis; chorismate biosynthesis; chorismate from D-erythrose 4-phosphate and phosphoenolpyruvate: step 6/7. Its function is as follows. Catalyzes the transfer of the enolpyruvyl moiety of phosphoenolpyruvate (PEP) to the 5-hydroxyl of shikimate-3-phosphate (S3P) to produce enolpyruvyl shikimate-3-phosphate and inorganic phosphate. In Parvibaculum lavamentivorans (strain DS-1 / DSM 13023 / NCIMB 13966), this protein is 3-phosphoshikimate 1-carboxyvinyltransferase.